We begin with the raw amino-acid sequence, 768 residues long: WD repeat-containing protein 20 homolog (768 aa).

Residues 103 to 122 form a disordered region; sequence ESPEAVAPTSSTYEHHKNEP. 4 WD repeats span residues 224–264, 302–342, 345–384, and 454–497; these read IEKT…ASSN, IGEG…LLAV, SYFG…VVCR, and CSLA…LNQG. The interval 531–608 is disordered; sequence VSPGGAGVNA…VNSESSKKQN (78 aa). The segment covering 539–553 has biased composition (polar residues); it reads NASSDSQSITNNHTT. Residues 570–582 show a composition bias toward low complexity; that stretch reads FSKFTSGSSSATS. Polar residues predominate over residues 595–608; the sequence is NGASVNSESSKKQN. One copy of the WD 5 repeat lies at 646 to 683; sequence VSHDRLTVLEFREDCVVTACQEGYICTWGRPGRYQPKR. The segment at 684–749 is disordered; sequence DCINSPGTAS…PNITSPSYRV (66 aa). The span at 688 to 712 shows a compositional bias: polar residues; it reads SPGTASPESGQKPSGSTSAMTSSYG. A compositionally biased stretch (low complexity) spans 724–733; sequence SRSSSTYSNS. Over residues 734-749 the composition is skewed to polar residues; it reads EQQLRSPNITSPSYRV.

As to quaternary structure, interacts with usp-46; the interaction increases the catalytic activity of usp-46 in the presence of wdr-48. As to expression, expressed in several neurons in the head and tail.

In terms of biological role, together with wdr-48, binds to and stimulates the activity of the deubiquitinating enzyme usp-46, leading to deubiquitination and stabilization of the glr-1 glutamate receptor. This chain is WD repeat-containing protein 20 homolog, found in Caenorhabditis elegans.